The primary structure comprises 89 residues: MLRNSRKIFTGNVVSDKMNKTITVVVNVYKKDLLYGKIVKKSRKFYVHDETEKAKKGNLISFMETRPLSKTKKFRLLKIIFSNDKDKKQ.

The protein belongs to the universal ribosomal protein uS17 family. Part of the 30S ribosomal subunit.

In terms of biological role, one of the primary rRNA binding proteins, it binds specifically to the 5'-end of 16S ribosomal RNA. The sequence is that of Small ribosomal subunit protein uS17 from Phytoplasma mali (strain AT).